A 148-amino-acid chain; its full sequence is Large ribosomal subunit protein uL15 (148 aa).

The interval 1 to 47 (MAFSLENLRPAPGSRPKSKRVGRGSSSGKGKTSSRGHKGQGRGTGKV) is disordered.

It belongs to the universal ribosomal protein uL15 family. As to quaternary structure, part of the 50S ribosomal subunit.

In terms of biological role, binds to the 23S rRNA. In Kosmotoga olearia (strain ATCC BAA-1733 / DSM 21960 / TBF 19.5.1), this protein is Large ribosomal subunit protein uL15.